A 173-amino-acid chain; its full sequence is Translationally-controlled tumor protein homolog (173 aa).

Positions 1 to 173 constitute a TCTP domain; the sequence is MIIFKDMITG…FKHGLEEEKV (173 aa).

This sequence belongs to the TCTP family. As to expression, expressed by the venom gland.

It is found in the secreted. Its function is as follows. Venom protein that causes edema, enhances vascular permeability and is likely related to the inflammatory activity of the venom. The protein is Translationally-controlled tumor protein homolog of Grammostola rosea (Chilean rose tarantula).